The following is a 351-amino-acid chain: NADP-dependent isopropanol dehydrogenase (351 aa).

Zn(2+) is bound by residues Cys37, His59, Glu60, and Asp150. NADP(+)-binding positions include 175–178 (IGAV), 198–200 (GSR), Tyr218, 265–267 (INY), and Lys340.

Belongs to the zinc-containing alcohol dehydrogenase family. Homotetramer. Requires Zn(2+) as cofactor.

The enzyme catalyses propan-2-ol + NADP(+) = acetone + NADPH + H(+). Functionally, alcohol dehydrogenase with a preference for medium chain secondary alcohols, such as 2-butanol and isopropanol. Has very low activity with primary alcohols, such as ethanol. Under physiological conditions, the enzyme reduces aldehydes and 2-ketones to produce secondary alcohols. Is active with acetaldehyde and propionaldehyde. The polypeptide is NADP-dependent isopropanol dehydrogenase (adh) (Clostridium beijerinckii (Clostridium MP)).